The chain runs to 72 residues: Translation initiation factor IF-1 (72 aa).

Residues 1-72 form the S1-like domain; it reads MSKEDVIEVE…SRGRIVYRFK (72 aa).

This sequence belongs to the IF-1 family. As to quaternary structure, component of the 30S ribosomal translation pre-initiation complex which assembles on the 30S ribosome in the order IF-2 and IF-3, IF-1 and N-formylmethionyl-tRNA(fMet); mRNA recruitment can occur at any time during PIC assembly.

It is found in the cytoplasm. One of the essential components for the initiation of protein synthesis. Stabilizes the binding of IF-2 and IF-3 on the 30S subunit to which N-formylmethionyl-tRNA(fMet) subsequently binds. Helps modulate mRNA selection, yielding the 30S pre-initiation complex (PIC). Upon addition of the 50S ribosomal subunit IF-1, IF-2 and IF-3 are released leaving the mature 70S translation initiation complex. The protein is Translation initiation factor IF-1 of Desulfitobacterium hafniense (strain Y51).